We begin with the raw amino-acid sequence, 387 residues long: uncharacterized protein (387 aa).

This sequence belongs to the geranylgeranyl reductase family. ChlP subfamily.

This is an uncharacterized protein from Methanosarcina barkeri (strain Fusaro / DSM 804).